Reading from the N-terminus, the 55-residue chain is Mitochondrial import receptor subunit TOM7 homolog (55 aa).

Residues 1–20 (MVKLSKEAKQRLQQLFKGGQ) lie on the Cytoplasmic side of the membrane. The helical transmembrane segment at 21–36 (FAIRWGFIPLVIYLGF) threads the bilayer. The Mitochondrial intermembrane segment spans residues 37–55 (KRGADPGMPEPTVLSLLWG).

The protein belongs to the Tom7 family. As to quaternary structure, forms part of the preprotein translocase complex of the outer mitochondrial membrane (TOM complex) which consists of at least 7 different proteins (TOMM5, TOMM6, TOMM7, TOMM20, TOMM22, TOMM40 and TOMM70).

Its subcellular location is the mitochondrion outer membrane. Required for assembly and stability of the TOM complex. Positive regulator of PRKN translocation to damaged mitochondria. Acts probably by stabilizing PINK1 on the outer membrane of depolarized mitochondria. This chain is Mitochondrial import receptor subunit TOM7 homolog (TOMM7), found in Bos taurus (Bovine).